The chain runs to 370 residues: Phosphate-binding protein PstS 2 (370 aa).

The signal sequence occupies residues 1 to 22 (MKFARSGAAVSLLAAGTLVLTA). C23 carries N-palmitoyl cysteine lipidation. A lipid anchor (S-diacylglycerol cysteine) is attached at C23. Phosphate-binding positions include 54–56 (STA), S84, D102, and 191–193 (SGT).

It belongs to the PstS family. As to quaternary structure, the complex is composed of two ATP-binding proteins (PstB), two transmembrane proteins (PstC and PstA) and a solute-binding protein (PstS).

It localises to the cell membrane. Functions in inorganic phosphate uptake, although probably not the main uptake protein under phosphate starvation. Part of the ABC transporter complex PstSACB involved in phosphate import. The polypeptide is Phosphate-binding protein PstS 2 (pstS2) (Mycobacterium tuberculosis (strain ATCC 25618 / H37Rv)).